We begin with the raw amino-acid sequence, 451 residues long: Trigger factor (451 aa).

Residues 165-250 (DDKLTIDFEG…LHQIQAREAL (86 aa)) form the PPIase FKBP-type domain.

It belongs to the FKBP-type PPIase family. Tig subfamily.

It localises to the cytoplasm. The catalysed reaction is [protein]-peptidylproline (omega=180) = [protein]-peptidylproline (omega=0). Functionally, involved in protein export. Acts as a chaperone by maintaining the newly synthesized protein in an open conformation. Functions as a peptidyl-prolyl cis-trans isomerase. The chain is Trigger factor from Helicobacter pylori (strain G27).